A 2692-amino-acid polypeptide reads, in one-letter code: Thyroglobulin (2692 aa).

The N-terminal stretch at 1-19 is a signal peptide; that stretch reads MALALWVFALLGSACLVSA. Tyr-24 carries the post-translational modification Iodotyrosine; alternate. Tyr-24 bears the Sulfotyrosine; alternate mark. Residue Tyr-24 is modified to Thyroxine; alternate. Residue Tyr-24 is modified to Triiodothyronine; alternate. 3 consecutive Thyroglobulin type-1 domains span residues 31 to 92, 93 to 160, and 161 to 248; these read LRPC…PVAC, LSFC…PARC, and PGSC…LAGT. 8 disulfides stabilise this stretch: Cys-34–Cys-52, Cys-63–Cys-70, Cys-72–Cys-92, Cys-96–Cys-120, Cys-131–Cys-138, Cys-140–Cys-160, Cys-164–Cys-183, and Cys-194–Cys-235. Position 108 is an iodotyrosine (Tyr-108). Residue Asn-110 is glycosylated (N-linked (GlcNAc...) asparagine). An Iodotyrosine; alternate modification is found at Tyr-149. Tyr-149 is subject to Diiodotyrosine; alternate. N-linked (GlcNAc...) asparagine glycosylation is present at Asn-198. Iodotyrosine occurs at positions 234 and 258. A Thyroglobulin type-1 4 domain is found at 298-358; it reads PTKCEVERFA…TRRPSEPLSC (61 aa). 9 cysteine pairs are disulfide-bonded: Cys-301-Cys-319, Cys-330-Cys-336, Cys-338-Cys-358, Cys-364-Cys-621, Cys-408-Cys-609, Cys-632-Cys-637, Cys-639-Cys-659, Cys-663-Cys-688, and Cys-699-Cys-704. 3 N-linked (GlcNAc...) asparagine glycosylation sites follow: Asn-485, Asn-497, and Asn-546. Thyroglobulin type-1 domains are found at residues 606 to 659, 660 to 727, and 728 to 923; these read SQGC…RPRC, PTAC…PKQC, and PTPC…VPAC. Tyr-705 bears the Iodotyrosine; alternate mark. Tyr-705 carries the post-translational modification Thyroxine; alternate. At Tyr-705 the chain carries Triiodothyronine; alternate. A Diiodotyrosine; alternate modification is found at Tyr-705. Disulfide bonds link Cys-706-Cys-727, Cys-731-Cys-764, Cys-775-Cys-900, Cys-902-Cys-923, Cys-927-Cys-1033, Cys-1044-Cys-1051, Cys-1053-Cys-1079, Cys-1128-Cys-1147, Cys-1151-Cys-1171, Cys-1183-Cys-1190, Cys-1192-Cys-1212, Cys-1237-Cys-1287, and Cys-1262-Cys-1278. Asn-749 carries an N-linked (GlcNAc...) asparagine glycan. The residue at position 786 (Tyr-786) is an Iodotyrosine. N-linked (GlcNAc...) asparagine glycosylation is present at Asn-855. Tyr-868 is modified (iodotyrosine; alternate). Tyr-868 carries the diiodotyrosine; alternate modification. A Diiodotyrosine modification is found at Tyr-885. Residue Asn-949 is glycosylated (N-linked (GlcNAc...) asparagine). Tyr-994 is subject to Iodotyrosine; alternate. Tyr-994 is subject to Diiodotyrosine; alternate. 3 consecutive Thyroglobulin type-1 domains span residues 1021–1079, 1088–1147, and 1148–1212; these read SGPL…PTPC, LSAW…SAPC, and PGLC…QPAC. N-linked (GlcNAc...) asparagine glycosylation occurs at Asn-1142. Residue Tyr-1241 is modified to Iodotyrosine. Thyroxine is present on Tyr-1241. Residues Asn-1296 and Asn-1384 are each glycosylated (N-linked (GlcNAc...) asparagine). Cystine bridges form between Cys-1372–Cys-1392, Cys-1395–Cys-1406, Cys-1409–Cys-1423, Cys-1426–Cys-1443, Cys-1447–Cys-1456, Cys-1476–Cys-1498, Cys-1535–Cys-1559, Cys-1539–Cys-1545, Cys-1571–Cys-1594, Cys-1656–Cys-1681, Cys-1660–Cys-1666, Cys-1665–Cys-1766, and Cys-1692–Cys-1709. 3 Type II repeats span residues 1389-1402, 1403-1419, and 1420-1436; these read PLGC…SYFQ, EEQC…EQTG, and SLAC…TSVG. Tyr-1400 bears the Iodotyrosine; alternate mark. A Diiodotyrosine; alternate modification is found at Tyr-1400. The region spanning 1444–1498 is the Thyroglobulin type-1 11 domain; sequence VTACQRDEAGLQCDQDGQYRASQRDRASGKAFCVDSEGRRLPWSETQAPLVDAQC. The Type IIIA repeat unit spans residues 1535–1655; sequence CLADCARDEA…GASLTEAHLF (121 aa). The stretch at 1656–1823 is one Type IIIB repeat; sequence CLLACDRDSC…LFSLQQAHLW (168 aa). A glycan (N-linked (GlcNAc...) asparagine) is linked at Asn-1800. Intrachain disulfides connect Cys-1824–Cys-1850, Cys-1828–Cys-1835, Cys-1859–Cys-1870, Cys-1927–Cys-1955, Cys-1931–Cys-1937, Cys-1936–Cys-2007, Cys-1966–Cys-1979, Cys-2061–Cys-2085, Cys-2065–Cys-2071, and Cys-2094–Cys-2103. Residues 1824-1926 form a Type IIIA repeat; the sequence is CLSRCVQEPS…DKAISSGFFE (103 aa). The Type IIIB repeat unit spans residues 1927-2060; that stretch reads CERLCDVDPC…VGDFSAARER (134 aa). Asn-1944 carries an N-linked (GlcNAc...) asparagine glycan. A Type IIIA repeat occupies 2061–2118; it reads CLLECSRHQACLVTTLQTRPGAVRCMFYADTQSCTHSLQAQNCQLLLREEATHIYRKP. Position 2115 is an iodotyrosine (Tyr-2115). Positions 2119–2692 are cholinesterase-like (ChEL); the sequence is DIPLPGLGSS…PELASKSYSK (574 aa). 2 N-linked (GlcNAc...) asparagine glycosylation sites follow: Asn-2181 and Asn-2226. Position 2467 is a thyroxine (Tyr-2467). Tyr-2500 bears the Iodotyrosine; alternate mark. Tyr-2500 is modified (thyroxine; alternate). Residue Tyr-2500 is modified to Triiodothyronine; alternate. Diiodotyrosine; alternate is present on Tyr-2500. Residues Tyr-2514 and Tyr-2544 each carry the iodotyrosine modification. The cysteines at positions 2518 and 2642 are disulfide-linked. Tyr-2624 bears the Diiodotyrosine mark. Residues 2658 to 2671 show a composition bias toward acidic residues; that stretch reads EAEDGPLAESEEED. The disordered stretch occupies residues 2658-2692; that stretch reads EAEDGPLAESEEEDRPGLTEDLLGLPELASKSYSK. Tyr-2690 is modified (iodotyrosine; alternate). Residue Tyr-2690 is modified to Thyroxine; alternate. Tyr-2690 carries the triiodothyronine; alternate modification. Position 2690 is a diiodotyrosine; alternate (Tyr-2690).

It belongs to the type-B carboxylesterase/lipase family. In terms of assembly, monomer. Homodimer (via ChEL region); occurs in the endoplasmic reticulum and is required for export to the Golgi apparatus. Homooligomer; disulfide-linked; stored in this form in the thyroid follicle lumen. Iodinated on tyrosine residues by TPO. There are 4 pairs of iodinated tyrosines used for coupling: acceptor Tyr-24 is coupled to donor Tyr-149 or Tyr-234, acceptor Tyr-2500 is coupled to donor Tyr-2467, acceptor Tyr-2690 in monomer 1 is coupled to donor Tyr-2690 in monomer 2 and acceptor Tyr-1241 in monomer 1 is coupled to donor Tyr-108 in monomer 2. In terms of processing, sulfated tyrosines are desulfated during iodination. Post-translationally, undergoes sequential proteolysis by cathepsins to release thyroxine (T4) and triiodothyronine (T3) hormones. In the thyroid follicle lumen, cross-linked TG (storage form) is solubilized by limited proteolysis mediated by cathepsins CTSB and/or CTSL. Partially cleaved TG is further processed by CTSK/cathepsin K and/or CTSL resulting in the release of T4. Following endocytosis, further processing occurs leading to the release of T3 and more T4 hormones. As to expression, expressed in thyroid epithelial cells.

Its subcellular location is the secreted. Its function is as follows. Acts as a substrate for the production of iodinated thyroid hormones thyroxine (T4) and triiodothyronine (T3). The synthesis of T3 and T4 involves iodination of selected tyrosine residues of TG/thyroglobulin followed by their oxidative coupling. Following TG re-internalization and lysosomal-mediated proteolysis, T3 and T4 are released from the polypeptide backbone leading to their secretion into the bloodstream. One dimer produces 7 thyroid hormone molecules. This is Thyroglobulin from Sus scrofa (Pig).